A 423-amino-acid polypeptide reads, in one-letter code: Gamma-glutamyl phosphate reductase (423 aa).

Over residues 1–14 the composition is skewed to low complexity; it reads MTLQAAPRSAAAQQ. The segment at 1-25 is disordered; that stretch reads MTLQAAPRSAAAQQREPDLRQEVHD. Residues 15–25 show a composition bias toward basic and acidic residues; the sequence is REPDLRQEVHD.

This sequence belongs to the gamma-glutamyl phosphate reductase family.

It localises to the cytoplasm. The enzyme catalyses L-glutamate 5-semialdehyde + phosphate + NADP(+) = L-glutamyl 5-phosphate + NADPH + H(+). It functions in the pathway amino-acid biosynthesis; L-proline biosynthesis; L-glutamate 5-semialdehyde from L-glutamate: step 2/2. Functionally, catalyzes the NADPH-dependent reduction of L-glutamate 5-phosphate into L-glutamate 5-semialdehyde and phosphate. The product spontaneously undergoes cyclization to form 1-pyrroline-5-carboxylate. The sequence is that of Gamma-glutamyl phosphate reductase from Mycobacterium marinum (strain ATCC BAA-535 / M).